Reading from the N-terminus, the 525-residue chain is M-phase inducer phosphatase 1 (525 aa).

Positions 73-83 (MGSSESTDSGF) match the Phosphodegron motif. The residue at position 75 (S75) is a Phosphoserine; by CHEK1. Phosphoserine; by NEK11 occurs at positions 78, 81, and 87. Residue S106 is modified to Phosphoserine. S123 carries the phosphoserine; by CHEK1 and CHEK2 modification. The KEN box signature appears at 140–142 (KEN). Phosphoserine; by CHEK1 is present on S177. Disordered stretches follow at residues 179–204 (PARM…PQSP) and 262–308 (SASC…PEKP). S279 and S293 each carry phosphoserine; by CHEK1 and CHEK2. Residues 294 to 306 (VAGASPEEAASPE) are compositionally biased toward low complexity. Residue S322 is modified to Phosphoserine. In terms of domain architecture, Rhodanese spans 377-483 (LIKEFVIIDC…FFLKCQSHCE (107 aa)). C432 is an active-site residue. T508 carries the phosphothreonine; by CHEK1 modification. Phosphoserine; by PLK3 occurs at positions 514 and 520.

Belongs to the MPI phosphatase family. Interacts with CCNB1/cyclin B1. Interacts with YWHAE/14-3-3 epsilon when phosphorylated. Interacts with CUL1 specifically when CUL1 is neddylated and active. Interacts with BTRC/BTRCP1 and FBXW11/BTRCP2. Interactions with CUL1, BTRC and FBXW11 are enhanced upon DNA damage. Interacts with HSP90AB1; prevents heat shock-mediated CDC25A degradation and contributes to cell cycle progression. In terms of processing, phosphorylated by CHEK1 on Ser-75, Ser-123, Ser-177, Ser-279, Ser-293 and Thr-508 during checkpoint mediated cell cycle arrest. Also phosphorylated by CHEK2 on Ser-123, Ser-279, and Ser-293 during checkpoint mediated cell cycle arrest. Phosphorylation on Ser-177 and Thr-508 creates binding sites for YWHAE/14-3-3 epsilon which inhibits CDC25A. Phosphorylation on Ser-75, Ser-123, Ser-177, Ser-279 and Ser-293 may also promote ubiquitin-dependent proteolysis of CDC25A by the SCF complex. Phosphorylation of CDC25A at Ser-75 by CHEK1 primes it for subsequent phosphorylation at Ser-78, Ser-81 and Ser-87 by NEK11. Phosphorylation by NEK11 is required for BTRC-mediated polyubiquitination and degradation. Phosphorylation by PIM1 leads to an increase in phosphatase activity. Phosphorylated by PLK3 following DNA damage, leading to promote its ubiquitination and degradation. Ubiquitinated by the anaphase promoting complex/cyclosome (APC/C) ubiquitin ligase complex that contains FZR1/CDH1 during G1 phase leading to its degradation by the proteasome. Ubiquitinated by a SCF complex containing BTRC and FBXW11 during S phase leading to its degradation by the proteasome. Deubiquitination by USP17L2/DUB3 leads to its stabilization.

It catalyses the reaction O-phospho-L-tyrosyl-[protein] + H2O = L-tyrosyl-[protein] + phosphate. Stimulated by B-type cyclins. Stimulated by PIM1-mediated phosphorylation. Tyrosine protein phosphatase which functions as a dosage-dependent inducer of mitotic progression. Directly dephosphorylates CDK1 and stimulates its kinase activity. Also dephosphorylates CDK2 in complex with cyclin-E, in vitro. The sequence is that of M-phase inducer phosphatase 1 (CDC25A) from Bos taurus (Bovine).